Consider the following 138-residue polypeptide: Large ribosomal subunit protein bL17 (138 aa).

The protein belongs to the bacterial ribosomal protein bL17 family. In terms of assembly, part of the 50S ribosomal subunit. Contacts protein L32.

This is Large ribosomal subunit protein bL17 from Jannaschia sp. (strain CCS1).